The following is a 129-amino-acid chain: 3-oxo-4,17-pregnadiene-20-carboxyl-CoA hydratase beta subunit (129 aa).

This sequence belongs to the thioester dehydratase family. As to quaternary structure, heterodimer composed of ChsH1 and ChsH2. Two heterodimers combine to form a heterotetramer. The complex interacts with Ltp2 via the DUF35 C-terminal region of ChsH2. The ChsH1-ChsH2-Ltp2 protein complex is composed of two protomers that form a heterohexameric structure through the Ltp2 dimerization interface.

The catalysed reaction is 3-oxochola-4,17-dien-22-oyl-CoA + H2O = 17-hydroxy-3-oxochol-4-en-22-oyl-CoA. It carries out the reaction (2E)-octenoyl-CoA + H2O = 3-hydroxyoctanoyl-CoA. The enzyme catalyses (2E)-decenoyl-CoA + H2O = 3-hydroxydecanoyl-CoA. It functions in the pathway steroid metabolism; cholesterol degradation. With respect to regulation, in the absence of the Ltp2 aldolase, ChsH1/ChsH2 can hydrate only about 30% of the 3-OPDC-CoA substrate. Complete turnover requires the presence of Ltp2. Its function is as follows. Involved in cholesterol side chain degradation. Catalyzes the hydration of 3-oxo-4,17-pregnadiene-20-carboxyl-CoA (3-OPDC-CoA) to form 17-hydroxy-3-oxo-4-pregnene-20-carboxyl-CoA (17-HOPC-CoA), in the modified beta-oxidation pathway for cholesterol side chain degradation. Can also use octenoyl-CoA and decenoyl-CoA, with lower efficiency. The polypeptide is 3-oxo-4,17-pregnadiene-20-carboxyl-CoA hydratase beta subunit (Mycobacterium tuberculosis (strain ATCC 25618 / H37Rv)).